We begin with the raw amino-acid sequence, 323 residues long: Ethanolamine-phosphate cytidylyltransferase (323 aa).

This sequence belongs to the cytidylyltransferase family.

Its subcellular location is the cytoplasm. It is found in the nucleus. The enzyme catalyses phosphoethanolamine + CTP + H(+) = CDP-ethanolamine + diphosphate. The protein operates within phospholipid metabolism; phosphatidylethanolamine biosynthesis; phosphatidylethanolamine from ethanolamine: step 2/3. In terms of biological role, ethanolamine-phosphate cytidylyltransferase which catalyzes the second step of phosphatidylethanolamine biosynthesis. Involved in the maintenance of plasma membrane and required for proper sporulation. This is Ethanolamine-phosphate cytidylyltransferase from Saccharomyces cerevisiae (strain ATCC 204508 / S288c) (Baker's yeast).